Consider the following 107-residue polypeptide: MAGSALAVRARLGVWGMRVLQTRGFGSDSSESMDSGAGSIREAGGAFGKREKAEEDRYFREKTREQLAALKKHHEDEIDHHSKEIERLQKQIERHKKKIKYLKNSEH.

The N-terminal 25 residues, 1-25, are a transit peptide targeting the mitochondrion; it reads MAGSALAVRARLGVWGMRVLQTRGF. The disordered stretch occupies residues 25-58; the sequence is FGSDSSESMDSGAGSIREAGGAFGKREKAEEDRY. Positions 26-52 are N-terminal inhibitory region; the sequence is GSDSSESMDSGAGSIREAGGAFGKREK. Position 39 is a phosphoserine (serine 39). The segment covering 48–58 has biased composition (basic and acidic residues); it reads GKREKAEEDRY. Positions 60-107 form a coiled coil; sequence REKTREQLAALKKHHEDEIDHHSKEIERLQKQIERHKKKIKYLKNSEH. The tract at residues 74–106 is antiparallel alpha-helical coiled coil region; sequence HEDEIDHHSKEIERLQKQIERHKKKIKYLKNSE. Lysine 103 bears the N6-succinyllysine mark.

The protein belongs to the ATPase inhibitor family. Homodimer; represents the active form and is present at a pH value below 6.5. Homotetramer; represents the inactive form and is present at a pH value above 7.0.

The protein resides in the mitochondrion. Its function is as follows. Endogenous F(1)F(o)-ATPase inhibitor limiting ATP depletion when the mitochondrial membrane potential falls below a threshold and the F(1)F(o)-ATP synthase starts hydrolyzing ATP to pump protons out of the mitochondrial matrix. Required to avoid the consumption of cellular ATP when the F(1)F(o)-ATP synthase enzyme acts as an ATP hydrolase. Indirectly acts as a regulator of heme synthesis in erythroid tissues: regulates heme synthesis by modulating the mitochondrial pH and redox potential, allowing FECH to efficiently catalyze the incorporation of iron into protoporphyrin IX to produce heme. The sequence is that of ATPase inhibitor, mitochondrial from Rattus norvegicus (Rat).